Reading from the N-terminus, the 740-residue chain is Alpha-1,6-mannosylglycoprotein 6-beta-N-acetylglucosaminyltransferase A (740 aa).

Topologically, residues 1–13 (MAFFSPWKLSSQK) are cytoplasmic. A helical; Signal-anchor for type II membrane protein membrane pass occupies residues 14–30 (LGFFLVTFGFIWGMMLL). The Lumenal portion of the chain corresponds to 31 to 740 (HFTIQQRTQP…GQVALCKDCL (710 aa)). N-linked (GlcNAc...) asparagine glycans are attached at residues Asn109, Asn114, and Asn117. 9 disulfides stabilise this stretch: Cys144–Cys182, Cys155–Cys195, Cys171–Cys337, Cys371–Cys625, Cys648–Cys723, Cys652–Cys725, Cys659–Cys712, Cys680–Cys701, and Cys736–Cys739. The segment at 212-740 (NSLAEIRTDF…GQVALCKDCL (529 aa)) is sufficient for catalytic activity. Asn333 carries an N-linked (GlcNAc...) asparagine glycan. 377–378 (DS) is a binding site for substrate. Asn432 and Asn446 each carry an N-linked (GlcNAc...) asparagine glycan. Glu525 is a UDP-N-acetyl-alpha-D-glucosamine binding site. Lys553 contributes to the substrate binding site.

The protein belongs to the glycosyltransferase 18 family. In terms of processing, N-glycosylated. A secreted form is released from the membrane after cleavage by gamma-secretase. Detected in kidney (at protein level). Detected in kidney.

Its subcellular location is the golgi apparatus membrane. It localises to the secreted. It catalyses the reaction N(4)-{beta-D-GlcNAc-(1-&gt;2)-[beta-D-GlcNAc-(1-&gt;4)]-alpha-D-Man-(1-&gt;3)-[beta-D-GlcNAc-(1-&gt;2)-alpha-D-Man-(1-&gt;6)]-beta-D-Man-(1-&gt;4)-beta-D-GlcNAc-(1-&gt;4)-beta-D-GlcNAc}-L-asparaginyl-[protein] + UDP-N-acetyl-alpha-D-glucosamine = N(4)-{beta-D-GlcNAc-(1-&gt;2)-[beta-D-GlcNAc-(1-&gt;4)]-alpha-D-Man-(1-&gt;3)-[beta-D-GlcNAc-(1-&gt;2)-[beta-D-GlcNAc-(1-&gt;6)]-alpha-D-Man-(1-&gt;6)]-beta-D-Man-(1-&gt;4)-beta-D-GlcNAc-(1-&gt;4)-beta-D-GlcNAc}-L-asparaginyl-[protein] + UDP + H(+). It participates in protein modification; protein glycosylation. Its function is as follows. Catalyzes the addition of N-acetylglucosamine (GlcNAc) in beta 1-6 linkage to the alpha-linked mannose of biantennary N-linked oligosaccharides. Catalyzes an important step in the biosynthesis of branched, complex-type N-glycans, such as those found on EGFR, TGFR (TGF-beta receptor) and CDH2. Via its role in the biosynthesis of complex N-glycans, plays an important role in the activation of cellular signaling pathways, reorganization of the actin cytoskeleton, cell-cell adhesion and cell migration. MGAT5-dependent EGFR N-glycosylation enhances the interaction between EGFR and LGALS3 and thereby prevents rapid EGFR endocytosis and prolongs EGFR signaling. Required for efficient interaction between TGFB1 and its receptor. Enhances activation of intracellular signaling pathways by several types of growth factors, including FGF2, PDGF, IGF, TGFB1 and EGF. MGAT5-dependent CDH2 N-glycosylation inhibits CDH2-mediated homotypic cell-cell adhesion and contributes to the regulation of downstream signaling pathways. Promotes cell migration. Contributes to the regulation of the inflammatory response. MGAT5-dependent TCR N-glycosylation enhances the interaction between TCR and LGALS3, limits agonist-induced TCR clustering, and thereby dampens TCR-mediated responses to antigens. Required for normal leukocyte evasation and accumulation at sites of inflammation. Inhibits attachment of monocytes to the vascular endothelium and subsequent monocyte diapedesis. Functionally, promotes proliferation of umbilical vein endothelial cells and angiogenesis, at least in part by promoting the release of the growth factor FGF2 from the extracellular matrix. The sequence is that of Alpha-1,6-mannosylglycoprotein 6-beta-N-acetylglucosaminyltransferase A (Mgat5) from Rattus norvegicus (Rat).